Reading from the N-terminus, the 1037-residue chain is Probable aminoglycoside efflux pump (1037 aa).

At 1–9 the chain is on the cytoplasmic side; that stretch reads MANFFIDRP. The helical transmembrane segment at 10–28 threads the bilayer; it reads IFAWVLAILLCLTGTLAIF. At 29–339 the chain is on the periplasmic side; it reads SLPVEQYPDL…TSFVKASIED (311 aa). A helical transmembrane segment spans residues 340–359; it reads VVKTLLEAIALVFLVMYLFL. At 360–365 the chain is on the cytoplasmic side; that stretch reads QNFRAT. Residues 366–385 form a helical membrane-spanning segment; it reads LIPTIAVPVVLMGTFSVLYA. At 386–391 the chain is on the periplasmic side; that stretch reads FGYSVN. Residues 392–413 traverse the membrane as a helical segment; that stretch reads TLTMFAMVLAIGLLVDDAIVVV. Over 414-441 the chain is Cytoplasmic; the sequence is ENVERIMSEEGLTPREATRKSMGQIQGA. Residues 442 to 460 form a helical membrane-spanning segment; the sequence is LVGIAMVLSAVFVPMAFFG. Residues 461–473 lie on the Periplasmic side of the membrane; sequence GTTGAIYRQFSIT. The chain crosses the membrane as a helical span at residues 474-496; sequence IVAAMVLSVLVAMILTPALCATL. The Cytoplasmic segment spans residues 497–537; the sequence is LKPLKKGEHHGQKGFFAWFNQMFNRNAERYEKGVAKILHRS. The chain crosses the membrane as a helical span at residues 538 to 556; that stretch reads LRWIVIYVLLLGGMVFLFL. Topologically, residues 557–870 are periplasmic; it reads RLPTSFLPLE…SYQERLSGAQ (314 aa). Residues 871–890 traverse the membrane as a helical segment; the sequence is APALYAISLLVVFLCLAALY. The Cytoplasmic segment spans residues 891-896; sequence ESWSVP. Residues 897–916 traverse the membrane as a helical segment; the sequence is FSVMLVVPLGVIGALLATWM. Over 917–922 the chain is Periplasmic; the sequence is RGLEND. The chain crosses the membrane as a helical span at residues 923 to 944; that stretch reads VYFQVGLLTVIGLSAKNAILIV. The Cytoplasmic segment spans residues 945–971; it reads EFANEMNQKGHDLFEATLHACRQRLRP. Residues 972 to 990 traverse the membrane as a helical segment; sequence ILMTSLAFIFGVLPMATST. Residues 991-1003 are Periplasmic-facing; the sequence is GAGSGGQHAVGTG. The helical transmembrane segment at 1004-1026 threads the bilayer; the sequence is VMGGMISATILAIYFVPLFFVLV. Over 1027-1037 the chain is Cytoplasmic; that stretch reads RRRFPLKPRPE.

This sequence belongs to the resistance-nodulation-cell division (RND) (TC 2.A.6) family.

It is found in the cell inner membrane. In terms of biological role, participates in the efflux of aminoglycosides. Confers resistance to a variety of these substances. The polypeptide is Probable aminoglycoside efflux pump (acrD) (Escherichia coli (strain K12)).